The sequence spans 701 residues: DNA ligase (701 aa).

The segment at Met-1–Glu-21 is disordered. NAD(+) is bound by residues Asp-50–Asp-54, Ser-100–Leu-101, and Glu-130. The N6-AMP-lysine intermediate role is filled by Lys-132. Residues Arg-153, Glu-193, Lys-309, and Lys-333 each contribute to the NAD(+) site. Zn(2+)-binding residues include Cys-427, Cys-430, Cys-446, and Cys-452. A BRCT domain is found at Ser-616–Gly-701.

Belongs to the NAD-dependent DNA ligase family. LigA subfamily. The cofactor is Mg(2+). Requires Mn(2+) as cofactor.

The catalysed reaction is NAD(+) + (deoxyribonucleotide)n-3'-hydroxyl + 5'-phospho-(deoxyribonucleotide)m = (deoxyribonucleotide)n+m + AMP + beta-nicotinamide D-nucleotide.. Its function is as follows. DNA ligase that catalyzes the formation of phosphodiester linkages between 5'-phosphoryl and 3'-hydroxyl groups in double-stranded DNA using NAD as a coenzyme and as the energy source for the reaction. It is essential for DNA replication and repair of damaged DNA. The polypeptide is DNA ligase (Mycobacterium sp. (strain KMS)).